The following is a 176-amino-acid chain: O-acetyl-ADP-ribose deacetylase (176 aa).

The Macro domain maps to 1 to 175; it reads MSGRINVVQG…LYQRLLGQYD (175 aa). Substrate contacts are provided by residues 11 to 12, Asn25, 33 to 35, and 122 to 126; these read DI, GVD, and STGIY. Asp35 serves as the catalytic Proton acceptor.

The protein belongs to the MacroD-type family. YmdB subfamily. As to quaternary structure, homodimer. Interacts with RNase III.

It catalyses the reaction 3''-O-acetyl-ADP-D-ribose + H2O = ADP-D-ribose + acetate + H(+). The catalysed reaction is 2''-O-acetyl-ADP-D-ribose + H2O = ADP-D-ribose + acetate + H(+). Functionally, deacetylates O-acetyl-ADP ribose to yield ADP-ribose and free acetate. Down-regulates ribonuclease 3 (RNase III) activity. Acts by interacting directly with the region of the ribonuclease that is required for dimerization/activation. The protein is O-acetyl-ADP-ribose deacetylase of Cronobacter turicensis (strain DSM 18703 / CCUG 55852 / LMG 23827 / z3032).